Consider the following 2393-residue polypeptide: Leucine-rich repeat serine/threonine-protein kinase 1 (2393 aa).

ANK repeat units lie at residues 56 to 86 (HGRT…SLNL), 90 to 120 (RGKT…PMKS), 123 to 152 (EGHC…KESE), 197 to 226 (EDET…HLLQ), 230 to 259 (SKDT…QLVK), 264 to 293 (EGST…PSEF), 317 to 347 (ECRT…SIDG), 361 to 390 (RGRT…DVNL), 407 to 437 (IGSG…DTDN), and 439 to 464 (ALRL…FADP). 5 LRR repeats span residues 532 to 553 (AITR…LFQM), 555 to 576 (SLRS…TYYI), 580 to 600 (SLEI…QFLS), 604 to 625 (QLQQ…IWLC), and 627 to 648 (ALKE…ARAS). Residues 649–675 (RGERPRLNNSNNNFNTQSPTQESNPIV) form a disordered region. LRR repeat units lie at residues 718–739 (TLTT…LACT), 742–763 (RLLI…ACVP), and 765–787 (HLRT…SPLH). The disordered stretch occupies residues 797 to 844 (TSNGSMLPKRRNSPARQHRSRSKSAVRSQRSLSVSRHHALIDPQKEEE). Residues 804–820 (PKRRNSPARQHRSRSKS) show a composition bias toward basic residues. Residues 821–830 (AVRSQRSLSV) are compositionally biased toward polar residues. A compositionally biased stretch (basic and acidic residues) spans 835-844 (ALIDPQKEEE). 4 LRR repeats span residues 856-877 (WLKT…NAAS), 883-905 (ALNV…ARLT), 906-928 (LLSM…YGML), and 930-952 (RLWS…VNVE). One can recognise a Roc domain in the interval 969–1167 (ESKTYHHLRL…NTIYRTAWEV (199 aa)). Residues 982 to 989 (GSDGVGKS), 1040 to 1044 (DFGGQ), and 1098 to 1101 (TNLD) contribute to the GTP site. Positions 1233–1422 (FYAACTFLHD…GFWSRLVTRI (190 aa)) constitute a COR domain. Disordered regions lie at residues 1361–1382 (CPSP…TDQN) and 1596–1633 (RNGS…RTTG). 2 stretches are compositionally biased toward polar residues: residues 1366–1382 (GSPT…TDQN) and 1620–1633 (ITSS…RTTG). Positions 1694–1992 (LKRSRMLGRG…LVGFCAAPEF (299 aa)) constitute a Protein kinase domain. Residues 1700–1708 (LGRGAFGFV) and Lys-1726 each bind ATP. The active-site Proton acceptor is Asp-1847.

Belongs to the protein kinase superfamily. TKL Ser/Thr protein kinase family. ROCO subfamily. Mg(2+) is required as a cofactor. It depends on Mn(2+) as a cofactor. Expressed in cell bodies, but not in dendritic or axonal processes, of adult head neurons. Also present in non-neuronal tissues, such as the body wall musculature and the epithelial cells of the nematode vulva.

It is found in the golgi apparatus. It carries out the reaction L-seryl-[protein] + ATP = O-phospho-L-seryl-[protein] + ADP + H(+). The catalysed reaction is L-threonyl-[protein] + ATP = O-phospho-L-threonyl-[protein] + ADP + H(+). Its function is as follows. Determines polarized sorting of synaptic vesicle (SV) proteins to the axons by excluding SV proteins from the dendrite-specific transport machinery in the Golgi. Role in stress response. Appears to antagonize the effects of pink-1 both in the regulation of axon guidance and stress response. The protein is Leucine-rich repeat serine/threonine-protein kinase 1 (lrk-1) of Caenorhabditis elegans.